We begin with the raw amino-acid sequence, 451 residues long: tRNA(Ile)-lysidine synthase (451 aa).

21–26 is a binding site for ATP; it reads SGGLDS.

Belongs to the tRNA(Ile)-lysidine synthase family.

The protein resides in the cytoplasm. It catalyses the reaction cytidine(34) in tRNA(Ile2) + L-lysine + ATP = lysidine(34) in tRNA(Ile2) + AMP + diphosphate + H(+). Ligates lysine onto the cytidine present at position 34 of the AUA codon-specific tRNA(Ile) that contains the anticodon CAU, in an ATP-dependent manner. Cytidine is converted to lysidine, thus changing the amino acid specificity of the tRNA from methionine to isoleucine. This is tRNA(Ile)-lysidine synthase from Yersinia pseudotuberculosis serotype O:1b (strain IP 31758).